Consider the following 407-residue polypeptide: Lysine racemase (407 aa).

The N-terminal stretch at 1–18 (MSLGIRYLALLPLFVITA) is a signal peptide. Residue cysteine 19 is the site of N-palmitoyl cysteine attachment. Cysteine 19 is lipidated: S-diacylglycerol cysteine. A disulfide bridge links cysteine 70 with cysteine 96. Residue lysine 74 is the Proton acceptor of the active site. Residue lysine 74 is modified to N6-(pyridoxal phosphate)lysine. Arginine 173 is a binding site for substrate. The active-site Proton acceptor is the tyrosine 299. Methionine 347 lines the substrate pocket.

It belongs to the alanine racemase family. Bsr subfamily. In terms of assembly, forms a head-to-tail homodimer in the structure. Pyridoxal 5'-phosphate is required as a cofactor.

Its subcellular location is the cell membrane. It localises to the periplasm. It catalyses the reaction L-lysine = D-lysine. The catalysed reaction is L-arginine = D-arginine. The racemization activity of Lyr is completely inhibited by hydroxylamine. Its function is as follows. Amino-acid racemase that catalyzes the interconversion of L-lysine and D-lysine. To a lesser extent, is also able to interconvert arginine enantiomers. Cannot use methionine, asparagine, alanine, leucine, glutamine, phenylalanine and histidine as substrates. The protein is Lysine racemase of Proteus mirabilis.